The primary structure comprises 271 residues: Aminodeoxychorismate lyase (271 aa).

At Lys-140 the chain carries N6-(pyridoxal phosphate)lysine.

This sequence belongs to the class-IV pyridoxal-phosphate-dependent aminotransferase family. In terms of assembly, homodimer. Pyridoxal 5'-phosphate is required as a cofactor.

It carries out the reaction 4-amino-4-deoxychorismate = 4-aminobenzoate + pyruvate + H(+). It functions in the pathway cofactor biosynthesis; tetrahydrofolate biosynthesis; 4-aminobenzoate from chorismate: step 2/2. Functionally, involved in the biosynthesis of p-aminobenzoate (PABA), a precursor of tetrahydrofolate. Converts 4-amino-4-deoxychorismate into 4-aminobenzoate (PABA) and pyruvate. The chain is Aminodeoxychorismate lyase (pabC) from Vibrio harveyi (Beneckea harveyi).